Reading from the N-terminus, the 156-residue chain is Succinate dehydrogenase [ubiquinone] cytochrome b small subunit 1, mitochondrial (156 aa).

The N-terminal 25 residues, 1-25, are a transit peptide targeting the mitochondrion; it reads MLSAVRRAIPLSARILRTSLIQRCA. Over 26-59 the chain is Mitochondrial matrix; the sequence is GATSAAVTGAAPPQFDPIAAEKGFKPLHSHGTLF. A helical membrane pass occupies residues 60–78; it reads KIERYFAAAMVPLIPAAYF. The Mitochondrial intermembrane portion of the chain corresponds to 79-83; sequence IHGRE. A helical membrane pass occupies residues 84–104; that stretch reads MDLCLALALTLHVHWGVWGVV. His-95 contributes to the heme b binding site. At 105-119 the chain is on the mitochondrial matrix side; sequence NDYGRPFVLGDTLAA. An a rhodoquinol-binding site is contributed by Tyr-107. A helical transmembrane segment spans residues 120–141; it reads AVRVGAYIFTACLLAGLLYFNE. Over 142-156 the chain is Mitochondrial intermembrane; the sequence is HDVGLTRAFEMVWEL.

It belongs to the CybS family. In terms of assembly, component of the mitochondrial electron transport chain complex II composed of four subunits: a flavoprotein (Fp), an iron-sulfur protein (Ip), and a large cytochrome b (CybL) subunit and a small cytochrome b (CybS) subunit. There are 2 developmental stage-specific forms of complex II which have the Ip and CybL subunits in common. Complex II from the free-living larvae (aerobic environment) acts as a succinate dehydrogenase and is composed of the common subunit Ip and CybL and the stage specific subunits FpL and CybSL. Complex II from parasitic larvae and adults (anaerobic environment) acts as a fumarate reductase and is composed of the common subunit Ip and CybL and the stage specific subunits FpA and CybSA. The cofactor is heme b. Expressed in adult muscles (at protein level).

Its subcellular location is the mitochondrion inner membrane. Its function is as follows. Membrane-bound small subunit (CybS) of the mitochondrial electron transport chain complex II, which together with the membrane-bound large subunit (CybL), anchor the catalytic subunits to the inner mitochondria membrane. During the parasitic larvae and adult stages, which occur in an anaerobic environment, complex II acts as a fumarate reductase by transferring electrons from rhodoquinol to fumarate. The chain is Succinate dehydrogenase [ubiquinone] cytochrome b small subunit 1, mitochondrial from Ascaris suum (Pig roundworm).